Consider the following 488-residue polypeptide: Cysteine--tRNA ligase (488 aa).

Cys28 contacts Zn(2+). The 'HIGH' region motif lies at 30-40 (PTVYDDAHLGH). Positions 209, 239, and 243 each coordinate Zn(2+). The 'KMSKS' region motif lies at 271-275 (KMSKS). Residue Lys274 coordinates ATP.

This sequence belongs to the class-I aminoacyl-tRNA synthetase family. Monomer. Zn(2+) serves as cofactor.

The protein resides in the cytoplasm. The catalysed reaction is tRNA(Cys) + L-cysteine + ATP = L-cysteinyl-tRNA(Cys) + AMP + diphosphate. This chain is Cysteine--tRNA ligase, found in Helicobacter hepaticus (strain ATCC 51449 / 3B1).